The sequence spans 135 residues: Putative nickel-responsive regulator (135 aa).

Residues His79, His90, His92, and Cys98 each coordinate Ni(2+).

This sequence belongs to the transcriptional regulatory CopG/NikR family. The cofactor is Ni(2+).

Its function is as follows. Transcriptional regulator. This chain is Putative nickel-responsive regulator, found in Dictyoglomus thermophilum (strain ATCC 35947 / DSM 3960 / H-6-12).